Reading from the N-terminus, the 476-residue chain is Cysteine--tRNA ligase (476 aa).

A Zn(2+)-binding site is contributed by cysteine 36. Residues 38 to 48 carry the 'HIGH' region motif; that stretch reads PTVYDYAHIGN. Zn(2+) is bound by residues cysteine 221, histidine 246, and glutamate 250. The 'KMSKS' region motif lies at 278-282; sequence KMSKS. Lysine 281 contacts ATP.

Belongs to the class-I aminoacyl-tRNA synthetase family. As to quaternary structure, monomer. It depends on Zn(2+) as a cofactor.

It localises to the cytoplasm. The catalysed reaction is tRNA(Cys) + L-cysteine + ATP = L-cysteinyl-tRNA(Cys) + AMP + diphosphate. The sequence is that of Cysteine--tRNA ligase from Chlamydia abortus (strain DSM 27085 / S26/3) (Chlamydophila abortus).